The following is a 398-amino-acid chain: Phosphoglycerate kinase (398 aa).

Residues 23–25 (DLN), Arg-38, 61–64 (HFGR), Arg-120, and Arg-153 contribute to the substrate site. ATP-binding positions include Lys-203, Glu-325, and 355 to 358 (GGDT).

Belongs to the phosphoglycerate kinase family. In terms of assembly, monomer.

It is found in the cytoplasm. It catalyses the reaction (2R)-3-phosphoglycerate + ATP = (2R)-3-phospho-glyceroyl phosphate + ADP. It participates in carbohydrate degradation; glycolysis; pyruvate from D-glyceraldehyde 3-phosphate: step 2/5. The chain is Phosphoglycerate kinase from Mesorhizobium japonicum (strain LMG 29417 / CECT 9101 / MAFF 303099) (Mesorhizobium loti (strain MAFF 303099)).